The primary structure comprises 504 residues: Dihydrolipoamide dehydrogenase (504 aa).

The transit peptide at 1-34 (MLSQRLIGRTAVKSAFRPSGLPTVVNASRWRRGY) directs the protein to the mitochondrion. FAD-binding positions include 69–78 (EKRGTLGGTC), Lys-87, Gly-151, and 180–182 (TGS). A disulfide bond links Cys-78 and Cys-83. Residues 217–224 (GGGIIGLE), Glu-240, Val-275, and Gly-310 each bind NAD(+). FAD contacts are provided by residues Asp-351 and 357–360 (MLAH). The Proton acceptor role is filled by His-483.

It belongs to the class-I pyridine nucleotide-disulfide oxidoreductase family. In terms of assembly, eukaryotic pyruvate dehydrogenase (PDH) complexes are organized as a core consisting of the oligomeric dihydrolipoamide acetyl-transferase (E2), around which are arranged multiple copies of pyruvate dehydrogenase (E1), dihydrolipoamide dehydrogenase (E3) and protein X (E3BP) bound by non-covalent bonds. The Chaetomium thermophilum PDH complex contains 60 E2 units, 12 E3BP units, about 20 E1 units, and 12 or more E3 units. The units are organized in 1 E2 60-mer, 4 E3BP trimers, about 20 E1 tetramers, and a maximum of 12 E3 dimers. The E3BP trimers are bound inside the icosahedral core with tetrahedral symmetry. The cofactor is FAD.

The protein localises to the mitochondrion. The catalysed reaction is N(6)-[(R)-dihydrolipoyl]-L-lysyl-[protein] + NAD(+) = N(6)-[(R)-lipoyl]-L-lysyl-[protein] + NADH + H(+). Lipoamide dehydrogenase is a component of the alpha-ketoacid dehydrogenase complexes. This includes the pyruvate dehydrogenase complex, which catalyzes the overall conversion of pyruvate to acetyl-CoA and CO(2). Also acts as a component of the glycine cleavage system (glycine decarboxylase complex), which catalyzes the degradation of glycine. The 10-megadalton pyruvate dehydrogenase complex contains multiple copies of three enzymatic components: pyruvate dehydrogenase (E1), dihydrolipoamide acetyltransferase (E2) and lipoamide dehydrogenase (E3) and catalyzes the overall oxidative decarboxylation of pyruvate to form acetyl-CoA and CO(2). Within the complex, pyruvate and thiamine pyrophosphate (TPP or vitamin B1) are bound by pyruvate dehydrogenase E1 subunits alpha and beta and pyruvate is decarboxylated leading to the 2-carbon hydrohyethyl bound to TPP. The E2 component contains covalently-bound lipoyl cofactors and transfers the hydroxyethyl group from TPP to an oxidized form of covalently bound lipoamide, and the resulting acetyl group is then transferred to free coenzyme A to form acetyl-CoA and reduced dihydrolipoamide-E2. Finally, the flavoprotein dihydrolipoamide dehydrogenase (E3) re-oxidizes the lipoyl group of dihydrolipoamide-E2 to form lipoamide-E2 and NADH. A fourth subunit, E3BP, is responsible for tethering E3 in proximity to the core, forming the entire metabolon. The sequence is that of Dihydrolipoamide dehydrogenase from Chaetomium thermophilum (strain DSM 1495 / CBS 144.50 / IMI 039719) (Thermochaetoides thermophila).